We begin with the raw amino-acid sequence, 228 residues long: Triosephosphate isomerase (228 aa).

Residue 9-11 (NFK) participates in substrate binding. The active-site Electrophile is the His-93. Glu-141 acts as the Proton acceptor in catalysis. Residues Ile-146, Gly-181, and 202–203 (AS) each bind substrate.

This sequence belongs to the triosephosphate isomerase family. As to quaternary structure, homotetramer; dimer of dimers.

The protein localises to the cytoplasm. The catalysed reaction is D-glyceraldehyde 3-phosphate = dihydroxyacetone phosphate. It participates in carbohydrate biosynthesis; gluconeogenesis. Its pathway is carbohydrate degradation; glycolysis; D-glyceraldehyde 3-phosphate from glycerone phosphate: step 1/1. In terms of biological role, involved in the gluconeogenesis. Catalyzes stereospecifically the conversion of dihydroxyacetone phosphate (DHAP) to D-glyceraldehyde-3-phosphate (G3P). This Pyrobaculum calidifontis (strain DSM 21063 / JCM 11548 / VA1) protein is Triosephosphate isomerase.